The following is a 214-amino-acid chain: ATP-dependent Clp protease proteolytic subunit (214 aa).

Serine 106 functions as the Nucleophile in the catalytic mechanism. Histidine 131 is an active-site residue.

It belongs to the peptidase S14 family. In terms of assembly, fourteen ClpP subunits assemble into 2 heptameric rings which stack back to back to give a disk-like structure with a central cavity, resembling the structure of eukaryotic proteasomes.

Its subcellular location is the cytoplasm. It catalyses the reaction Hydrolysis of proteins to small peptides in the presence of ATP and magnesium. alpha-casein is the usual test substrate. In the absence of ATP, only oligopeptides shorter than five residues are hydrolyzed (such as succinyl-Leu-Tyr-|-NHMec, and Leu-Tyr-Leu-|-Tyr-Trp, in which cleavage of the -Tyr-|-Leu- and -Tyr-|-Trp bonds also occurs).. Functionally, cleaves peptides in various proteins in a process that requires ATP hydrolysis. Has a chymotrypsin-like activity. Plays a major role in the degradation of misfolded proteins. This is ATP-dependent Clp protease proteolytic subunit from Rhodopseudomonas palustris (strain BisB5).